Here is a 485-residue protein sequence, read N- to C-terminus: Forkhead box protein N3 (485 aa).

Residues 1 to 21 (MGPVMPPSKKPESPGISVSSG) form a disordered region. Serine 83, serine 85, and serine 97 each carry phosphoserine. Residues 86–108 (PVQDLDDDTPPSPAHSDMPYDAR) are disordered. The fork-head DNA-binding region spans 114 to 210 (KPPYSFSCLI…QALKKTPYHS (97 aa)). The tract at residues 315–454 (RTESEPSCGS…DEEMKEAAGS (140 aa)) is disordered. The span at 338–359 (SSAKSSHARSTSPASDCVSSSS) shows a compositional bias: low complexity. The segment covering 382 to 404 (HESHSETEEDDRKCSPKEAKDAL) has biased composition (basic and acidic residues). Residues 412-424 (QHKKRQHFAKARK) are compositionally biased toward basic residues. Serine 443 carries the post-translational modification Phosphoserine.

As to quaternary structure, interacts through its C-terminus with the C-terminus of SNW1/SKIP.

It is found in the nucleus. Acts as a transcriptional repressor. May be involved in DNA damage-inducible cell cycle arrests (checkpoints). The polypeptide is Forkhead box protein N3 (FOXN3) (Sus scrofa (Pig)).